The following is a 260-amino-acid chain: Small ribosomal subunit protein uS2 (260 aa).

Residues 223–260 form a disordered region; the sequence is EGRQGEDEEEASQEVAEGVSKDSLEDLKKSVEEGSNEE. Residues 241-254 are compositionally biased toward basic and acidic residues; it reads VSKDSLEDLKKSVE.

The protein belongs to the universal ribosomal protein uS2 family.

The chain is Small ribosomal subunit protein uS2 from Pediococcus pentosaceus (strain ATCC 25745 / CCUG 21536 / LMG 10740 / 183-1w).